We begin with the raw amino-acid sequence, 367 residues long: Voltage-gated potassium channel subunit beta-2 (367 aa).

Phosphoserine is present on residues serine 9, serine 14, and serine 20. An Asymmetric dimethylarginine; alternate modification is found at arginine 28. Arginine 28 carries the omega-N-methylarginine; alternate modification. Position 31 is a phosphoserine (serine 31). NADP(+) contacts are provided by threonine 56, tryptophan 57, glutamine 63, and aspartate 85. The Proton donor/acceptor role is filled by tyrosine 90. Position 112 is a phosphoserine (serine 112). Lysine 124 bears the N6-acetyllysine mark. NADP(+) contacts are provided by asparagine 158, serine 188, arginine 189, glutamine 214, tryptophan 243, serine 244, proline 245, leucine 246, alanine 247, cysteine 248, lysine 254, tyrosine 262, arginine 264, glycine 323, serine 325, glutamine 329, glutamate 332, and asparagine 333.

It belongs to the shaker potassium channel beta subunit family. Homotetramer. Interaction with tetrameric potassium channel alpha subunits gives rise to a heterooctamer. Identified in potassium channel complexes containing KCNA1, KCNA2, KCNA4, KCNA5, KCNA6, KCNAB1, KCNAB2 and KCND3. Interacts (in unphosphorylated form) with MAPRE1. Forms a ternary complex with SQSTM1 and PRKCZ. In terms of processing, phosphorylated by PRKCZ; may be regulated by incorporation in a complex composed of PRKCZ and SQSTM1. In terms of tissue distribution, detected in brain. Detected at basket cell terminals in cerebellum and in the juxtaparanodal region of nodes of Ranvier (at protein level). Strongest expression in brain and eye. Highest levels in brain detected in brainstem and diencephalon. Strong expression also detected in lung and heart. Moderate expression in kidney, T-lymphocytes and skeletal muscle.

The protein localises to the cytoplasm. The protein resides in the membrane. It localises to the cell membrane. It is found in the cell projection. Its subcellular location is the axon. The protein localises to the synapse. The protein resides in the synaptosome. It localises to the cytoskeleton. It carries out the reaction hydroxyacetone + NADP(+) = methylglyoxal + NADPH + H(+). It catalyses the reaction (E)-4-oxonon-2-en-1-ol + NADP(+) = (E)-4-oxonon-2-enal + NADPH + H(+). In terms of biological role, regulatory subunit of the voltage-gated potassium (Kv) Shaker channel family. Shaker channels are composed of pore-forming and potassium-conducting alpha subunits and of regulatory beta subunits. The beta-2/KCNAB2 subunit promotes potassium channel closure via a mechanism that does not involve physical obstruction of the channel pore. Promotes the inactivation of Kv1.4/KCNA4 and Kv1.5/KCNA5 alpha subunit-containing channels. Displays nicotinamide adenine dinucleotide phosphate (NADPH)-dependent aldoketoreductase activity by catalyzing the NADPH-dependent reduction of a wide range of aldehyde and ketone substrates. Substrate specificity includes methylglyoxal, 9,10-phenanthrenequinone, prostaglandin J2, 4-nitrobenzaldehyde, 4-nitroacetophenone and 4-oxo-trans-2-nonenal (in vitro, no physiological substrate identified yet). The binding of oxidized and reduced nucleotide cofactors alters Kv channel gating and may contribute to dynamic fine tuning of cell excitability. Contributes to the regulation of nerve signaling, and prevents neuronal hyperexcitability. The chain is Voltage-gated potassium channel subunit beta-2 from Mus musculus (Mouse).